The chain runs to 182 residues: UPF0397 protein YdcD (182 aa).

Helical transmembrane passes span 8 to 28, 42 to 62, 74 to 94, 114 to 134, and 146 to 166; these read IVVA…LINI, AVLA…IGFI, APWW…AFGV, IVQF…GDVL, and QGIV…TLLL.

This sequence belongs to the UPF0397 family.

It localises to the cell membrane. This Lactococcus lactis subsp. lactis (strain IL1403) (Streptococcus lactis) protein is UPF0397 protein YdcD (ydcD).